The sequence spans 138 residues: Large ribosomal subunit protein uL16 (138 aa).

Over residues 1-17 the composition is skewed to basic residues; it reads MLIPRKVKHRKQHHPRQ. Positions 1–23 are disordered; the sequence is MLIPRKVKHRKQHHPRQRGIASG.

This sequence belongs to the universal ribosomal protein uL16 family. As to quaternary structure, part of the 50S ribosomal subunit.

Its function is as follows. Binds 23S rRNA and is also seen to make contacts with the A and possibly P site tRNAs. In Mycobacterium sp. (strain JLS), this protein is Large ribosomal subunit protein uL16.